Reading from the N-terminus, the 171-residue chain is NADP-reducing hydrogenase subunit HndA (171 aa).

Positions 98, 103, 139, and 143 each coordinate [2Fe-2S] cluster.

It belongs to the complex I 24 kDa subunit family. As to quaternary structure, heterotetramer composed of HndA, HndB, HndC and HndD subunits. HndA and HndB could form a heterodimeric intermediate in the electron transfer between the active site of hydrogenase subunit HndD and the NADP reduction site of the reducing subunit HndC. Requires [2Fe-2S] cluster as cofactor.

The catalysed reaction is H2 + NADP(+) = NADPH + H(+). Its activity is regulated as follows. Inhibited by oxygen. Functionally, catalyzes the reduction of NADP in the presence of molecular H(2) to yield NADPH. The protein is NADP-reducing hydrogenase subunit HndA (hndA) of Solidesulfovibrio fructosivorans (Desulfovibrio fructosivorans).